The chain runs to 20 residues: Chemoheterotroph-specific protein (20 aa).

This is Chemoheterotroph-specific protein from Thiomonas delicata (Thiomonas cuprina).